The following is a 307-amino-acid chain: Ribosomal RNA small subunit methyltransferase H (307 aa).

S-adenosyl-L-methionine contacts are provided by residues 34 to 36 (GGH), aspartate 53, leucine 88, aspartate 102, and glutamine 109.

This sequence belongs to the methyltransferase superfamily. RsmH family.

It is found in the cytoplasm. The enzyme catalyses cytidine(1402) in 16S rRNA + S-adenosyl-L-methionine = N(4)-methylcytidine(1402) in 16S rRNA + S-adenosyl-L-homocysteine + H(+). Its function is as follows. Specifically methylates the N4 position of cytidine in position 1402 (C1402) of 16S rRNA. The sequence is that of Ribosomal RNA small subunit methyltransferase H from Sulfurimonas denitrificans (strain ATCC 33889 / DSM 1251) (Thiomicrospira denitrificans (strain ATCC 33889 / DSM 1251)).